The sequence spans 614 residues: Kelch-like protein 40 (614 aa).

A BTB domain is found at Ile-33–Glu-100. Residues Cys-135–Glu-237 enclose the BACK domain. Kelch repeat units lie at residues Gln-353–Asn-405, Ser-406–Asn-455, Leu-456–Gly-503, Ile-505–Gly-550, and Leu-552–Leu-606.

The protein belongs to the KLHL40 family. Component of the BCR(KLHL40) E3 ubiquitin ligase complex.

It localises to the cytoplasm. The protein resides in the myofibril. Its subcellular location is the sarcomere. It is found in the a band. The protein localises to the i band. Its function is as follows. Substrate-specific adapter of a BCR (BTB-CUL3-RBX1) E3 ubiquitin ligase complex that acts as a key regulator of skeletal muscle development. The polypeptide is Kelch-like protein 40 (klhl40) (Xenopus tropicalis (Western clawed frog)).